A 123-amino-acid chain; its full sequence is Defensin beta 118 (123 aa).

Residues M1–P19 form the signal peptide. Intrachain disulfides connect C27/C54, C34/C48, and C38/C55. Positions L65 to S123 are excised as a propeptide. Positions K100–S123 are disordered. Positions G109–S123 are enriched in polar residues.

This sequence belongs to the beta-defensin family. Post-translationally, the three-dimensional structure formed by the three intramolecular disulfide bridges is indispensable for antimicrobial activity. As to expression, high-level and epididymis-specific expression. Most abundant in the epithelium of the caput and is also present in the lumen and bound to sperm.

The protein localises to the secreted. In terms of biological role, host defense peptide that exhibits antimicrobial activity against both Gram-negative bacteria, such as E.coli and S.typhimurium, and Gram-positive bacteria, such as S.aureus and B.subtilis. Inhibits cell adhesion of E.coli on intestinal epithelial enterocytes. Causes rapid permeabilization of both the outer and inner membrane of E.coli, leading to morphological alterations on the bacterial surface. Binds to bacterial lipopolysaccharides (LPS) with high affinity, and may thereby be involved in immunoregulation through LPS neutralization. May contribute to epididymal innate immunity and protect the sperm against attack by microorganisms. This Macaca mulatta (Rhesus macaque) protein is Defensin beta 118 (DEFB118).